The primary structure comprises 202 residues: Thymidylate kinase (202 aa).

Position 7–14 (7–14) interacts with ATP; the sequence is GTEGVGKT.

It belongs to the thymidylate kinase family.

It carries out the reaction dTMP + ATP = dTDP + ADP. In terms of biological role, phosphorylation of dTMP to form dTDP in both de novo and salvage pathways of dTTP synthesis. The protein is Thymidylate kinase of Acinetobacter baylyi (strain ATCC 33305 / BD413 / ADP1).